Here is a 271-residue protein sequence, read N- to C-terminus: Extracellular metalloprotease ARB_05317 (271 aa).

A signal peptide spans 1–19; the sequence is MRFSVLLTGLAAAGSIATA. N-linked (GlcNAc...) asparagine glycosylation is present at asparagine 136. Histidine 185 is a Zn(2+) binding site. The active site involves glutamate 186. Histidine 189 lines the Zn(2+) pocket. Residue asparagine 200 is glycosylated (N-linked (GlcNAc...) asparagine). The cysteines at positions 222 and 248 are disulfide-linked.

Belongs to the peptidase M43B family.

It is found in the secreted. Secreted metalloproteinase that allows assimilation of proteinaceous substrates. Plays a pivotal role as a pathogenicity determinant during infections and contributes to the ability of the pathogen to persist within the mammalian host. In Arthroderma benhamiae (strain ATCC MYA-4681 / CBS 112371) (Trichophyton mentagrophytes), this protein is Extracellular metalloprotease ARB_05317.